The sequence spans 120 residues: Small ribosomal subunit protein uS17 (120 aa).

Positions 1–22 (MMAEAKTGAKATKSAAAGAADG) are enriched in low complexity. Residues 1 to 46 (MMAEAKTGAKATKSAAAGAADGASKEKGPKHTPSPPKPSGRRKTRI) are disordered.

This sequence belongs to the universal ribosomal protein uS17 family. Part of the 30S ribosomal subunit.

In terms of biological role, one of the primary rRNA binding proteins, it binds specifically to the 5'-end of 16S ribosomal RNA. The polypeptide is Small ribosomal subunit protein uS17 (Mycobacterium ulcerans (strain Agy99)).